A 506-amino-acid polypeptide reads, in one-letter code: Glutamate--tRNA ligase (506 aa).

A 'HIGH' region motif is present at residues 12 to 22 (PSPTGDPHVGT). A 'KMSKS' region motif is present at residues 253–257 (KLSKR). Residue K256 coordinates ATP.

Belongs to the class-I aminoacyl-tRNA synthetase family. Glutamate--tRNA ligase type 1 subfamily. As to quaternary structure, monomer.

The protein localises to the cytoplasm. The enzyme catalyses tRNA(Glu) + L-glutamate + ATP = L-glutamyl-tRNA(Glu) + AMP + diphosphate. Its function is as follows. Catalyzes the attachment of glutamate to tRNA(Glu) in a two-step reaction: glutamate is first activated by ATP to form Glu-AMP and then transferred to the acceptor end of tRNA(Glu). This chain is Glutamate--tRNA ligase, found in Chlamydia trachomatis serovar A (strain ATCC VR-571B / DSM 19440 / HAR-13).